A 1352-amino-acid chain; its full sequence is DNA-directed RNA polymerase subunit beta (1352 aa).

Belongs to the RNA polymerase beta chain family. As to quaternary structure, the RNAP catalytic core consists of 2 alpha, 1 beta, 1 beta' and 1 omega subunit. When a sigma factor is associated with the core the holoenzyme is formed, which can initiate transcription.

It catalyses the reaction RNA(n) + a ribonucleoside 5'-triphosphate = RNA(n+1) + diphosphate. DNA-dependent RNA polymerase catalyzes the transcription of DNA into RNA using the four ribonucleoside triphosphates as substrates. This Hydrogenovibrio crunogenus (strain DSM 25203 / XCL-2) (Thiomicrospira crunogena) protein is DNA-directed RNA polymerase subunit beta.